A 666-amino-acid chain; its full sequence is UvrABC system protein B (666 aa).

The 144-residue stretch at 28-171 folds into the Helicase ATP-binding domain; that stretch reads NNINQGIQRQ…YLHVGELIEF (144 aa). Residue 41–48 participates in ATP binding; the sequence is GATGTGKT. A Beta-hairpin motif is present at residues 94-117; sequence YFDYYQPEAYKPITDTYIEKDSVT. A Helicase C-terminal domain is found at 436–598; the sequence is QIDDLINELM…IIPKTIIKPI (163 aa). Positions 624–659 constitute a UVR domain; that stretch reads NQKIKELKKKMEEAAKKREYEVAAQYRDMIVELEAI.

It belongs to the UvrB family. As to quaternary structure, forms a heterotetramer with UvrA during the search for lesions. Interacts with UvrC in an incision complex.

Its subcellular location is the cytoplasm. The UvrABC repair system catalyzes the recognition and processing of DNA lesions. A damage recognition complex composed of 2 UvrA and 2 UvrB subunits scans DNA for abnormalities. Upon binding of the UvrA(2)B(2) complex to a putative damaged site, the DNA wraps around one UvrB monomer. DNA wrap is dependent on ATP binding by UvrB and probably causes local melting of the DNA helix, facilitating insertion of UvrB beta-hairpin between the DNA strands. Then UvrB probes one DNA strand for the presence of a lesion. If a lesion is found the UvrA subunits dissociate and the UvrB-DNA preincision complex is formed. This complex is subsequently bound by UvrC and the second UvrB is released. If no lesion is found, the DNA wraps around the other UvrB subunit that will check the other stand for damage. The sequence is that of UvrABC system protein B from Ureaplasma parvum serovar 3 (strain ATCC 27815 / 27 / NCTC 11736).